A 218-amino-acid polypeptide reads, in one-letter code: Cytidylate kinase (218 aa).

10–18 (GPAAAGKST) contributes to the ATP binding site.

The protein belongs to the cytidylate kinase family. Type 1 subfamily.

The protein localises to the cytoplasm. The catalysed reaction is CMP + ATP = CDP + ADP. The enzyme catalyses dCMP + ATP = dCDP + ADP. The polypeptide is Cytidylate kinase (Staphylococcus haemolyticus (strain JCSC1435)).